The following is a 919-amino-acid chain: Protein phosphatase 1 regulatory subunit 37 (919 aa).

6 LRR repeats span residues 340–361, 368–388, 396–417, 425–445, 454–474, and 482–502; these read SLQY…FVAR, SLTV…MLLA, NLRE…AQLG, NIQI…AYVC, GLVT…GYLA, and SLET…HKLK. Disordered regions lie at residues 626 to 716 and 790 to 866; these read ATED…TIPS and APSQ…APLP. Residues 631 to 640 show a composition bias toward acidic residues; it reads THEEEEEEEA. Over residues 641–658 the composition is skewed to basic and acidic residues; sequence SPLKKIEEETTDALKDAT. Acidic residues predominate over residues 677–690; sequence PQDDSDSDTEDEET. The span at 691–701 shows a compositional bias: low complexity; that stretch reads PTNTSLTSTSP. Polar residues-rich tracts occupy residues 791-801 and 811-837; these read PSQTQNSTQPT and DAQQ…LTES. A coiled-coil region spans residues 833–861; it reads QLTESVSEEEQKKAETLNNEADINEDANT.

Belongs to the PPP1R37 family.

Its function is as follows. May inhibit phosphatase activity of protein phosphatase 1 (PP1) complexes. The protein is Protein phosphatase 1 regulatory subunit 37 (ppp1r37) of Danio rerio (Zebrafish).